The primary structure comprises 359 residues: CMP-N-acetylneuraminate-poly-alpha-2,8-sialyltransferase (359 aa).

Over 1-7 (MRSIRKR) the chain is Cytoplasmic. The chain crosses the membrane as a helical; Signal-anchor for type II membrane protein span at residues 8-20 (WTICTISLLLIFY). At 21–359 (KTKEMARTEE…KLTTGKCIKQ (339 aa)) the chain is on the lumenal side. 3 N-linked (GlcNAc...) asparagine glycosylation sites follow: Asn-50, Asn-74, and Asn-119. Disulfide bonds link Cys-142-Cys-292 and Cys-156-Cys-356. CMP-N-acetyl-beta-neuraminate is bound by residues Asn-147 and Asn-170. Asn-204 and Asn-219 each carry an N-linked (GlcNAc...) asparagine glycan. Residues Ser-279, Thr-280, Gly-281, and Trp-301 each contribute to the CMP-N-acetyl-beta-neuraminate site. The Proton donor/acceptor role is filled by His-331.

It belongs to the glycosyltransferase 29 family. Autopolysialylated.

It localises to the golgi apparatus membrane. The protein localises to the secreted. It carries out the reaction [N-acetyl-alpha-D-neuraminosyl-(2-&gt;8)](n) + CMP-N-acetyl-beta-neuraminate = [N-acetyl-alpha-D-neuraminosyl-(2-&gt;8)](n+1) + CMP + H(+). Catalyzes the transfer of a sialic acid from a CMP-linked sialic acid donor onto a terminal alpha-2,3-, alpha-2,6-, or alpha-2,8-linked sialic acid of an N-linked glycan protein acceptor through alpha-2,8-linkages. Therefore, participates in polysialic acid synthesis on various sialylated N-acetyllactosaminyl oligosaccharides, including NCAM1 N-glycans, FETUB N-glycans and AHSG. It is noteworthy that alpha-2,3-linked sialic acid is apparently a better acceptor than alpha-2,6-linked sialic acid. The protein is CMP-N-acetylneuraminate-poly-alpha-2,8-sialyltransferase (ST8SIA4) of Bos taurus (Bovine).